The sequence spans 912 residues: Protein translocase subunit SecA (912 aa).

ATP-binding positions include Q87, 105-109, and D510; that span reads GEGKT. Residues 854–912 are disordered; it reads KLRHEQASAAQAEGEGDDGQQGQQATPETFVRQERKVGRNEPCPCGSGKKYKQCCGKVS. Zn(2+) is bound by residues C896, C898, C907, and C908.

This sequence belongs to the SecA family. As to quaternary structure, monomer and homodimer. Part of the essential Sec protein translocation apparatus which comprises SecA, SecYEG and auxiliary proteins SecDF-YajC and YidC. Requires Zn(2+) as cofactor.

It is found in the cell inner membrane. It localises to the cytoplasm. It carries out the reaction ATP + H2O + cellular proteinSide 1 = ADP + phosphate + cellular proteinSide 2.. Part of the Sec protein translocase complex. Interacts with the SecYEG preprotein conducting channel. Has a central role in coupling the hydrolysis of ATP to the transfer of proteins into and across the cell membrane, serving both as a receptor for the preprotein-SecB complex and as an ATP-driven molecular motor driving the stepwise translocation of polypeptide chains across the membrane. This Marinobacter nauticus (strain ATCC 700491 / DSM 11845 / VT8) (Marinobacter aquaeolei) protein is Protein translocase subunit SecA.